We begin with the raw amino-acid sequence, 570 residues long: Periplasmic trehalase (570 aa).

The first 34 residues, 1 to 34, serve as a signal peptide directing secretion; that stretch reads MIPPEIRRSVLLQKAIKLALAGTLLTFASFSATA. Substrate is bound by residues Arg-159, 166–167, Asn-203, 212–214, 284–286, and Gly-317; these read WD, RSQ, and RPE. Active-site proton donor/acceptor residues include Asp-319 and Glu-503. Glu-518 is a binding site for substrate. Residues 544–570 form a disordered region; sequence KPCDSVPSTRPASLSATPTKTPSAATQ. Residues 554–570 show a composition bias toward low complexity; that stretch reads PASLSATPTKTPSAATQ.

This sequence belongs to the glycosyl hydrolase 37 family. As to quaternary structure, monomer.

It is found in the periplasm. It catalyses the reaction alpha,alpha-trehalose + H2O = alpha-D-glucose + beta-D-glucose. Its function is as follows. Provides the cells with the ability to utilize trehalose at high osmolarity by splitting it into glucose molecules that can subsequently be taken up by the phosphotransferase-mediated uptake system. This Salmonella typhimurium (strain LT2 / SGSC1412 / ATCC 700720) protein is Periplasmic trehalase.